Consider the following 311-residue polypeptide: MNEIEVDNLSHTNKNVATDNINNNNNDIELETIPNDSNNSNNNNNNNNNNNNNNNNNNNNNNNSNSNDIELETEPNNSNNNNNNNNNNNNNNNNNNNNNNNNNNNNNNKNENNNKIKNEKINILLSIKLYFIQYFKKWKGGEKSPVRADLEEIGWSWLSSFIGILVLALLHYRVTVEKETIFLLGSFAASAVLIFGAPKSPLAQPRNLVLGHIVSATVGSIIRVALVYTNAQTEVACALAVSLAIVGMHFTKSIHPPGGATALICVMSAEQRWRGFYYIFVPVASGSLTMLLTALIVNNFARKRKYPVFWW.

Residues 1–113 (MNEIEVDNLS…NNNNNKNENN (113 aa)) form a disordered region. A glycan (N-linked (GlcNAc...) asparagine) is linked at Asn-8. Positions 9–18 (LSHTNKNVAT) are enriched in polar residues. Residues Asn-35, Asn-38, Asn-62, and Asn-76 are each glycosylated (N-linked (GlcNAc...) asparagine). 2 stretches are compositionally biased toward low complexity: residues 37–67 (SNNS…SNSN) and 76–111 (NNSN…NKNE). Positions 95–124 (NNNNNNNNNNNNNNKNENNNKIKNEKINIL) form a coiled coil. 5 helical membrane passes run 150–170 (LEEI…LALL), 181–201 (IFLL…PKSP), 208–228 (LVLG…ALVY), 235–255 (VACA…KSIH), and 276–296 (FYYI…TALI).

It localises to the membrane. The chain is Transmembrane protein DDB_G0273707/DDB_G0273361 from Dictyostelium discoideum (Social amoeba).